A 155-amino-acid chain; its full sequence is Ribosomal RNA large subunit methyltransferase H (155 aa).

S-adenosyl-L-methionine contacts are provided by residues Leu72, Gly103, and 122–127 (LSPLTL).

This sequence belongs to the RNA methyltransferase RlmH family. In terms of assembly, homodimer.

The protein localises to the cytoplasm. It catalyses the reaction pseudouridine(1915) in 23S rRNA + S-adenosyl-L-methionine = N(3)-methylpseudouridine(1915) in 23S rRNA + S-adenosyl-L-homocysteine + H(+). Functionally, specifically methylates the pseudouridine at position 1915 (m3Psi1915) in 23S rRNA. This is Ribosomal RNA large subunit methyltransferase H from Histophilus somni (strain 129Pt) (Haemophilus somnus).